We begin with the raw amino-acid sequence, 83 residues long: Large ribosomal subunit protein bL27 (83 aa).

The segment at 1 to 22 (MAHKKGQGSTRNGRDSHSKRLG) is disordered.

The protein belongs to the bacterial ribosomal protein bL27 family.

The protein is Large ribosomal subunit protein bL27 of Protochlamydia amoebophila (strain UWE25).